The primary structure comprises 362 residues: Probable dual-specificity RNA methyltransferase RlmN (362 aa).

Residue E105 is the Proton acceptor of the active site. The Radical SAM core domain occupies 111–344 (HEYGNSICVT…VTIRREQGHD (234 aa)). Residues C118 and C349 are joined by a disulfide bond. The [4Fe-4S] cluster site is built by C125, C129, and C132. Residues 175 to 176 (GE), S207, 230 to 232 (SLH), and N306 each bind S-adenosyl-L-methionine. C349 (S-methylcysteine intermediate) is an active-site residue.

This sequence belongs to the radical SAM superfamily. RlmN family. [4Fe-4S] cluster is required as a cofactor.

It localises to the cytoplasm. It carries out the reaction adenosine(2503) in 23S rRNA + 2 reduced [2Fe-2S]-[ferredoxin] + 2 S-adenosyl-L-methionine = 2-methyladenosine(2503) in 23S rRNA + 5'-deoxyadenosine + L-methionine + 2 oxidized [2Fe-2S]-[ferredoxin] + S-adenosyl-L-homocysteine. It catalyses the reaction adenosine(37) in tRNA + 2 reduced [2Fe-2S]-[ferredoxin] + 2 S-adenosyl-L-methionine = 2-methyladenosine(37) in tRNA + 5'-deoxyadenosine + L-methionine + 2 oxidized [2Fe-2S]-[ferredoxin] + S-adenosyl-L-homocysteine. Specifically methylates position 2 of adenine 2503 in 23S rRNA and position 2 of adenine 37 in tRNAs. This is Probable dual-specificity RNA methyltransferase RlmN from Bacillus mycoides (strain KBAB4) (Bacillus weihenstephanensis).